A 503-amino-acid polypeptide reads, in one-letter code: Maturase K (503 aa).

The protein belongs to the intron maturase 2 family. MatK subfamily.

Its subcellular location is the plastid. The protein resides in the chloroplast. Functionally, usually encoded in the trnK tRNA gene intron. Probably assists in splicing its own and other chloroplast group II introns. The protein is Maturase K of Stangeria eriopus (Natal grass cycad).